Consider the following 320-residue polypeptide: Malate dehydrogenase (320 aa).

NAD(+) is bound by residues 10 to 15 and D34; that span reads GAGNIG. Residues R83 and R89 each coordinate substrate. Residues N96 and 119 to 121 each bind NAD(+); that span reads ITN. Substrate-binding residues include N121 and R152. Residue H176 is the Proton acceptor of the active site.

It belongs to the LDH/MDH superfamily. MDH type 3 family.

The catalysed reaction is (S)-malate + NAD(+) = oxaloacetate + NADH + H(+). Functionally, catalyzes the reversible oxidation of malate to oxaloacetate. The polypeptide is Malate dehydrogenase (Sphingopyxis alaskensis (strain DSM 13593 / LMG 18877 / RB2256) (Sphingomonas alaskensis)).